Reading from the N-terminus, the 577-residue chain is CDPK-related kinase 7 (577 aa).

Positions 1–38 (MGLCHGKPIEQQSKNLPISNEIEETPKNSSQKAKSSGF) are disordered. Residue glycine 2 is the site of N-myristoyl glycine attachment. A Protein kinase domain is found at 124–386 (YEIDGEVGRG…AAQALCHPWL (263 aa)). ATP is bound by residues 130 to 138 (VGRGHFGYT) and lysine 156. Aspartate 252 (proton acceptor) is an active-site residue. Position 292 is a phosphoserine (serine 292). A Phosphoserine; by CPK1, CPK10 and CPK34 modification is found at serine 334. The interval 391-421 (ELKIPSDMIIYKLVKVYIMSSSLRKSALAAL) is autoinhibitory domain. Residues 410–430 (SSSLRKSALAALAKTLTVPQL) are calmodulin binding (CaMBD). 4 EF-hand domains span residues 428–464 (PQLTYLQEQFNLLGPSKNGYISMQNYKTAILKSSTEA), 465–500 (TKDSRVLDFVHMISCLQYKKLDFEEFCASALSVYQL), 501–540 (EAMETWEQHARRAYELYEKDGNRVIMIEELATELGLGPSV), and 543–572 (HVVLQDWIRHSDGKLSFLGFVRLLHGVSSR). Positions 443, 445, 447, 484, 489, 520, 522, 529, 554, and 556 each coordinate Ca(2+). Phosphoserine is present on serine 558.

This sequence belongs to the protein kinase superfamily. Ser/Thr protein kinase family. CDPK subfamily. In terms of assembly, binds calmodulin (CaM) in a calcium-dependent manner. In terms of processing, autophosphorylated.

It localises to the membrane. It catalyses the reaction L-seryl-[protein] + ATP = O-phospho-L-seryl-[protein] + ADP + H(+). The enzyme catalyses L-threonyl-[protein] + ATP = O-phospho-L-threonyl-[protein] + ADP + H(+). With respect to regulation, activated by calcium and calmodulin. Autophosphorylation may play an important role in the regulation of the kinase activity. In terms of biological role, may play a role in signal transduction pathways that involve calcium as a second messenger. This chain is CDPK-related kinase 7 (CRK7), found in Arabidopsis thaliana (Mouse-ear cress).